The following is a 477-amino-acid chain: Putative multidrug resistance protein MdtD (477 aa).

A run of 14 helical transmembrane segments spans residues 13–33, 50–70, 73–93, 107–127, 139–159, 166–186, 196–216, 220–240, 268–288, 291–311, 326–348, 352–374, 394–414, and 432–452; these read LWIV…VNTA, SVIV…GWLA, VGVQ…SILC, VVQG…VMKI, FVTL…GFLV, WIFL…LLLM, FDIS…LALD, GMGL…AALA, LTAS…TPLF, VGMG…IIGS, GYRN…FPLV, GWIW…RFSA, LLSM…GILI, and AFIY…LAFA.

The protein belongs to the major facilitator superfamily. TCR/Tet family.

It localises to the cell inner membrane. The protein is Putative multidrug resistance protein MdtD of Serratia proteamaculans (strain 568).